A 191-amino-acid polypeptide reads, in one-letter code: NF-kappa-B inhibitor-interacting Ras-like protein 2 (191 aa).

Residues 1-191 (MGKSCKVVVC…KNKGSGSLDG (191 aa)) form a small GTPase-like region. A GTP-binding site is contributed by 11–18 (GQASVGKT). The Effector region signature appears at 35-43 (MIETQEDIY). GTP contacts are provided by residues 61 to 65 (DTRGL) and 120 to 123 (NKCD). Residues 169–191 (TQPQSKSAFPLSRKNKGSGSLDG) form a disordered region.

Belongs to the small GTPase superfamily. Ras family. KappaB-Ras subfamily. In terms of assembly, interacts with both NF-kappa-B inhibitor alpha (NFKBIA) and beta (NFKBIB) in vitro. However, it probably only interacts with NFKBIB in vivo. Interacts with GFOD1.

It localises to the cytoplasm. In terms of biological role, atypical Ras-like protein that acts as a potent regulator of NF-kappa-B activity by preventing the degradation of NF-kappa-B inhibitor beta (NFKBIB) by most signals, explaining why NFKBIB is more resistant to degradation. May act by blocking phosphorylation of NFKBIB and nuclear localization of p65/RELA NF-kappa-B subunit. It is unclear whether it acts as a GTPase. Both GTP- and GDP-bound forms block phosphorylation of NFKBIB. The polypeptide is NF-kappa-B inhibitor-interacting Ras-like protein 2 (Nkiras2) (Mus musculus (Mouse)).